Reading from the N-terminus, the 377-residue chain is Formate dehydrogenase, mitochondrial (377 aa).

A mitochondrion-targeting transit peptide spans 1 to 29 (MAAMWRAAARQLVDRAVGSRAAHTSAGSK). Substrate contacts are provided by isoleucine 121 and asparagine 145. NAD(+)-binding positions include threonine 146, aspartate 220, 255–259 (PLTEK), asparagine 281, aspartate 307, and 331–334 (HISG).

The protein belongs to the D-isomer specific 2-hydroxyacid dehydrogenase family. FDH subfamily. Homodimer.

The protein localises to the mitochondrion. The enzyme catalyses formate + NAD(+) = CO2 + NADH. Catalyzes the NAD(+)-dependent oxidation of formate to carbon dioxide. Involved in the cell stress response. In Hordeum vulgare (Barley), this protein is Formate dehydrogenase, mitochondrial.